Here is a 549-residue protein sequence, read N- to C-terminus: GPI mannosyltransferase 3 (549 aa).

The Cytoplasmic portion of the chain corresponds to 1-39 (MAYNNSVRKRKKDIQDANGFHRDQTIDKKSRATNKLEES). Residues 40 to 60 (LPTFKVFIVLFFIRLLNSLTI) form a helical membrane-spanning segment. Topologically, residues 61 to 119 (KTFFQADEYYQCLEPAYNFVFGSGYITWEWEEGIRSSIHPLIYALGYKMVSYVHFDDKP) are lumenal. A helical transmembrane segment spans residues 120–140 (IILIPKVIGALIASIGEVYLY). At 141–154 (KFSKKFTKNEKLAR) the chain is on the cytoplasmic side. The helical transmembrane segment at 155-175 (LTLILSLLSPFNWYIITRSFS) threads the bilayer. The Lumenal portion of the chain corresponds to 176-205 (NSFEMVLTTIAFTYWPWDNVISYKDISMSC). Residues 206-226 (IIAFISCIVRPTNGIIWLYLG) form a helical membrane-spanning segment. Residues 227 to 246 (INFMIKNYKLEKQSGKLMKL) are Cytoplasmic-facing. Residues 247 to 267 (ILILSIELILILLVNTGLDYI) form a helical membrane-spanning segment. Topologically, residues 268–289 (FYGKTTFPLYNFVEFNVIRNLS) are lumenal. N287 carries N-linked (GlcNAc...) asparagine glycosylation. The helical transmembrane segment at 290–310 (IFYGVAPWHFYLFQGVPIILM) threads the bilayer. Residues 311–328 (TYLPWLLHSAIVLKKYKS) are Cytoplasmic-facing. Residues 329 to 349 (LLGQVAILMIGGFSLIDHKEI) traverse the membrane as a helical segment. R350 is a topological domain (lumenal). A helical transmembrane segment spans residues 351 to 367 (FIYPLQPIFMLMVAYSI). Residues 368-379 (HETKHKFQRLYK) are Cytoplasmic-facing. A helical membrane pass occupies residues 380–400 (FLVPVIIILNLIIAIFFTQVH). Residues 401–549 (ERGVIDIVQY…KGDIIVYCQI (149 aa)) are Lumenal-facing. N442 is a glycosylation site (N-linked (GlcNAc...) asparagine).

Belongs to the glycosyltransferase 22 family. PIGB subfamily.

It is found in the endoplasmic reticulum membrane. It functions in the pathway glycolipid biosynthesis; glycosylphosphatidylinositol-anchor biosynthesis. Functionally, mannosyltransferase involved in glycosylphosphatidylinositol-anchor biosynthesis. Transfers the third mannose to Man2-GlcN-acyl-PI during GPI precursor assembly. This chain is GPI mannosyltransferase 3 (GPI10), found in Debaryomyces hansenii (strain ATCC 36239 / CBS 767 / BCRC 21394 / JCM 1990 / NBRC 0083 / IGC 2968) (Yeast).